We begin with the raw amino-acid sequence, 423 residues long: Ferrochelatase, mitochondrial (423 aa).

The N-terminal 54 residues, 1-54 (MRSLGANMAAALRAAGVLLRDPLASSSWRVCQPWRWKSGAAAAAVTTETAQHAQ), are a transit peptide targeting the mitochondrion. Residue Lys-57 is modified to N6-acetyllysine. Arg-115, Tyr-123, and Ser-130 together coordinate protoporphyrin IX. Lys-138 carries the N6-succinyllysine modification. [2Fe-2S] cluster is bound at residue Cys-196. Residues His-230 and Asp-383 contribute to the active site. Residues Cys-403, Cys-406, and Cys-411 each contribute to the [2Fe-2S] cluster site. An N6-acetyllysine; alternate modification is found at Lys-415. Lys-415 carries the N6-succinyllysine; alternate modification.

Belongs to the ferrochelatase family. In terms of assembly, homodimer. Homotetramer. Interacts with PGRMC1; the interaction results in decreased FECH activity. Interacts with ABCB10 and SLC25A37; this interaction forms an oligomeric complex. Forms a complex with ABCB7 and ABCB10, where a dimeric FECH bridges ABCB7 and ABCB10 homodimers; this complex may be required for cellular iron homeostasis, mitochondrial function and heme biosynthesis. Interacts with ABCB7 and ABCB10. It depends on [2Fe-2S] cluster as a cofactor.

The protein localises to the mitochondrion inner membrane. It catalyses the reaction heme b + 2 H(+) = protoporphyrin IX + Fe(2+). The protein operates within porphyrin-containing compound metabolism; protoheme biosynthesis; protoheme from protoporphyrin-IX: step 1/1. With respect to regulation, inhibited by nitric oxide (NO). The 2Fe-2S cluster could act as a NO sensor. Functionally, catalyzes the ferrous insertion into protoporphyrin IX and participates in the terminal step in the heme biosynthetic pathway. This Homo sapiens (Human) protein is Ferrochelatase, mitochondrial.